A 288-amino-acid polypeptide reads, in one-letter code: 2-dehydro-3-deoxyphosphooctonate aldolase (288 aa).

Belongs to the KdsA family.

Its subcellular location is the cytoplasm. The enzyme catalyses D-arabinose 5-phosphate + phosphoenolpyruvate + H2O = 3-deoxy-alpha-D-manno-2-octulosonate-8-phosphate + phosphate. It functions in the pathway carbohydrate biosynthesis; 3-deoxy-D-manno-octulosonate biosynthesis; 3-deoxy-D-manno-octulosonate from D-ribulose 5-phosphate: step 2/3. The protein operates within bacterial outer membrane biogenesis; lipopolysaccharide biosynthesis. The polypeptide is 2-dehydro-3-deoxyphosphooctonate aldolase (Syntrophobacter fumaroxidans (strain DSM 10017 / MPOB)).